Consider the following 48-residue polypeptide: Large ribosomal subunit protein uL14 (48 aa).

This sequence belongs to the universal ribosomal protein uL14 family.

The sequence is that of Large ribosomal subunit protein uL14 (RPL23) from Onchocerca volvulus.